The following is a 2188-amino-acid chain: Genome polyprotein (2188 aa).

Positions 772–774 (RGD) match the Cell attachment site motif. The LRAT domain occupies 795 to 889 (LAYLDRGFYK…DIFGTHTLSQ (95 aa)). Histidine 805 functions as the For protein 2A H-NC in the catalytic mechanism. Cysteine 874 serves as the catalytic For protein 2A H-NC; Acyl-thioester intermediate. The SF3 helicase domain occupies 1165–1326 (FQELARIPNR…KAYSKSGKLN (162 aa)). 1193–1200 (GEPGQGKS) is a binding site for ATP. Position 1502 is an O-(5'-phospho-RNA)-tyrosine (tyrosine 1502). The Peptidase C3 domain occupies 1526–1716 (APYDGQLEHI…IPFNFLKNDM (191 aa)). Residues histidine 1566, aspartate 1604, and cysteine 1678 each act as for protease 3C activity in the active site. Catalysis depends on cysteine 1905, which acts as the Acyl-thioester intermediate. The region spanning 1953–2067 (DYNYEMDYSQ…SLDREIEPER (115 aa)) is the RdRp catalytic domain. The Mg(2+) site is built by aspartate 1959 and aspartate 2053.

This sequence belongs to the picornaviruses polyprotein family. In terms of assembly, interacts with capsid protein VP1 and capsid protein VP3 to form heterotrimeric protomers. Five protomers subsequently associate to form pentamers which serve as building blocks for the capsid. Interacts with capsid protein VP0, and capsid protein VP3 to form heterotrimeric protomers. Five protomers subsequently associate to form pentamers which serve as building blocks for the capsid. As to quaternary structure, interacts with capsid protein VP0 and capsid protein VP1 to form heterotrimeric protomers. Five protomers subsequently associate to form pentamers which serve as building blocks for the capsid. In terms of assembly, homohexamer; forms a hexameric ring structure with 6-fold symmetry characteristic of AAA+ ATPases. Homodimer. Interacts with host ACBD3. As to quaternary structure, interacts with RNA-directed RNA polymerase. In terms of assembly, interacts with Viral protein genome-linked. The cofactor is Mg(2+). Post-translationally, VPg is uridylylated by the polymerase and is covalently linked to the 5'-end of genomic RNA. This uridylylated form acts as a nucleotide-peptide primer for the polymerase. Specific enzymatic cleavages yield mature proteins. All cleavages are catalyzed by P3C.

The protein resides in the virion. It localises to the host cytoplasm. It is found in the host nucleus. Its subcellular location is the host nucleolus. The protein localises to the host cytoplasmic vesicle membrane. The enzyme catalyses RNA(n) + a ribonucleoside 5'-triphosphate = RNA(n+1) + diphosphate. It carries out the reaction a ribonucleoside 5'-triphosphate + H2O = a ribonucleoside 5'-diphosphate + phosphate + H(+). It catalyses the reaction Selective cleavage of Gln-|-Gly bond in the poliovirus polyprotein. In other picornavirus reactions Glu may be substituted for Gln, and Ser or Thr for Gly.. Its function is as follows. Forms an icosahedral capsid of pseudo T=3 symmetry together with capsid proteins VP1 and VP3. The capsid is 300 Angstroms in diameter, composed of 60 copies of each capsid protein and enclosing the viral positive strand RNA genome. Capsid proteins interact with host alpha-V/beta-3 integrin heterodimer to provide virion attachment target cell. This attachment induces virion internalization predominantly through clathrin-mediated endocytosis. Binds packaging signals present in the viral RNA. Functionally, forms an icosahedral capsid of pseudo T=3 symmetry together with capsid proteins VP0 and VP1. The capsid is 300 Angstroms in diameter, composed of 60 copies of each capsid protein and enclosing the viral positive strand RNA genome. Capsid proteins interact with host alpha-V/beta-3 integrin heterodimer to provide virion attachment target cell. This attachment induces virion internalization predominantly through clathrin-mediated endocytosis. Binds packaging signals present in the viral RNA. Forms an icosahedral capsid of pseudo T=3 symmetry together with capsid proteins VP0 and VP3. The capsid is 300 Angstroms in diameter, composed of 60 copies of each capsid protein and enclosing the viral positive strand RNA genome. Capsid proteins interact with host alpha-V/beta-3 integrin heterodimer to provide virion attachment target cell. This attachment induces virion internalization predominantly through clathrin-mediated endocytosis. Binds packaging signals present in the viral RNA. In terms of biological role, is not a protease. Its function is as follows. Plays an essential role in the virus replication cycle by acting as a viroporin. Creates a pore in the host endoplasmic reticulum and as a consequence releases Ca2+ in the cytoplasm of infected cell. In turn, high levels of cytoplasmic calcium may trigger membrane trafficking and transport of viral ER-associated proteins to viroplasms, sites of viral genome replication. Functionally, induces and associates with structural rearrangements of intracellular membranes. Displays RNA-binding, nucleotide binding and NTPase activities. May play a role in virion morphogenesis and viral RNA encapsidation by interacting with the capsid protein VP3. Localizes the viral replication complex to the surface of membranous vesicles. It inhibits host cell endoplasmic reticulum-to-Golgi apparatus transport and causes the disassembly of the Golgi complex, possibly through GBF1 interaction. This would result in depletion of MHC, trail receptors and IFN receptors at the host cell surface. Plays an essential role in viral RNA replication by recruiting ACBD3 and PI4KB at the viral replication sites, thereby allowing the formation of the rearranged membranous structures where viral replication takes place. In terms of biological role, acts as a primer for viral RNA replication and remains covalently bound to viral genomic RNA. VPg is uridylylated prior to priming replication into VPg-pUpU. The VPg-pUpU is then used as primer on the genomic RNA poly(A) by the RNA-dependent RNA polymerase to replicate the viral genome. Following genome release from the infecting virion in the cytoplasm, the VPg-RNA linkage is probably removed by host TDP2. During the late stage of the replication cycle, host TDP2 is excluded from sites of viral RNA synthesis and encapsidation, allowing for the generation of progeny virions. Its function is as follows. Cysteine protease that generates mature viral proteins from the precursor polyprotein. In addition to its proteolytic activity, it binds to viral RNA, and thus influences viral genome replication. RNA and substrate bind cooperatively to the protease. Functionally, replicates the viral genomic RNA on the surface of intracellular membranes. Covalently attaches UMP to a tyrosine of VPg, which is used to prime RNA synthesis. The positive stranded RNA genome is first replicated at virus induced membranous vesicles, creating a dsRNA genomic replication form. This dsRNA is then used as template to synthesize positive stranded RNA genomes. ss(+)RNA genomes are either translated, replicated or encapsidated. The chain is Genome polyprotein from Human parechovirus 5 (strain CT86-6760) (HPeV-5).